A 712-amino-acid polypeptide reads, in one-letter code: Transferrin-binding protein B (712 aa).

The first 20 residues, 1 to 20 (MNNPLVNQAAMVLPVFLLSA), serve as a signal peptide directing secretion. C21 carries the N-palmitoyl cysteine lipid modification. C21 carries S-diacylglycerol cysteine lipidation. The N-terminal handle domain stretch occupies residues 59-196 (GGYGFAMRLK…YHGKEPSRQL (138 aa)). Disordered regions lie at residues 78–104 (EDEV…PKRQ), 123–144 (PYLK…QPKN), 223–256 (IIQP…LTDG), 309–338 (NGKA…SLSG), 364–398 (SAKT…SSEN), 442–495 (ASES…GDTN), and 689–712 (NATN…QPVR). The span at 95–104 (DEPKELPKRQ) shows a compositional bias: basic and acidic residues. Residues 128-144 (SNHQNGNTGNGINQPKN) are compositionally biased toward polar residues. Positions 197–367 (PASGKITYKG…KVAVVGSAKT (171 aa)) are N-terminal beta barrel domain. Low complexity-rich tracts occupy residues 372 to 398 (ANGN…SSEN) and 446 to 459 (GNNQ…GGTA). The segment at 389–555 (NGAAGTSSEN…SMFLQGERTD (167 aa)) is C-terminal handle domain. Positions 462–475 (RKFDHTPESDKKDA) are enriched in basic and acidic residues. Polar residues-rich tracts occupy residues 477–495 (AGTQ…GDTN) and 689–700 (NATNASGNSSAT). The segment at 556–712 (EKEIPSEQNI…FGAKRQQPVR (157 aa)) is C-terminal beta barrel domain.

It belongs to the TbpB family. Isotype II subfamily. As to quaternary structure, binds only human holo-transferrin (TF), via the TF C-terminus. Forms a large complex with TF and TbpA. Interacts via its C-terminal domain with Slam1.

The protein resides in the cell outer membrane. The protein localises to the cell surface. Functionally, neisseria acquires iron by extracting it from serum transferrin (TF) in its human host. Acts as a TF receptor and is required for TF utilization. Involved in the initial capture of TF. Helps select only those TF molecules that can be used as an iron source and concentrates them on the cell surface, maintaining the iron-loaded status of the TF C-terminal lobe until its delivery to TbpA. In Neisseria meningitidis serogroup B (strain ATCC BAA-335 / MC58), this protein is Transferrin-binding protein B.